Reading from the N-terminus, the 110-residue chain is Large ribosomal subunit protein uL22 (110 aa).

It belongs to the universal ribosomal protein uL22 family. As to quaternary structure, part of the 50S ribosomal subunit.

This protein binds specifically to 23S rRNA; its binding is stimulated by other ribosomal proteins, e.g. L4, L17, and L20. It is important during the early stages of 50S assembly. It makes multiple contacts with different domains of the 23S rRNA in the assembled 50S subunit and ribosome. In terms of biological role, the globular domain of the protein is located near the polypeptide exit tunnel on the outside of the subunit, while an extended beta-hairpin is found that lines the wall of the exit tunnel in the center of the 70S ribosome. The polypeptide is Large ribosomal subunit protein uL22 (Marinomonas sp. (strain MWYL1)).